The following is a 572-amino-acid chain: Pentatricopeptide repeat-containing protein At1g26900, mitochondrial (572 aa).

Residues 1–117 constitute a mitochondrion transit peptide; that stretch reads MTLAITSRLR…RAFSVFNQLR (117 aa). PPR repeat units follow at residues 89 to 123, 124 to 158, 159 to 189, 191 to 225, 226 to 260, 261 to 291, 292 to 326, 327 to 361, 362 to 392, 393 to 427, 430 to 460, and 466 to 496; these read NLFM…GLTL, DRFS…GFMV, FTDL…MPQS, DAVT…EVVV, NVST…GLDL, DLHL…AIRK, DVVT…KMKP, NSST…RIAL, DAIL…MKDK, DVKS…NCKV, NEIT…MVEA, and KVEH…LPIT. Residues 501-572 are type E motif; sequence AWRALLAACR…EAGYSAIEIE (72 aa).

This sequence belongs to the PPR family. PCMP-E subfamily.

Its subcellular location is the mitochondrion. The protein is Pentatricopeptide repeat-containing protein At1g26900, mitochondrial (PCMP-E54) of Arabidopsis thaliana (Mouse-ear cress).